The sequence spans 195 residues: Kunitz-type protein bli-5 (195 aa).

An N-terminal signal peptide occupies residues 1–17 (MKTALLSLILFSCHIWA). The BPTI/Kunitz inhibitor domain maps to 120–190 (CIQGLSPVDG…KTKLQCESYC (71 aa)). 2 disulfides stabilise this stretch: C120–C190 and C164–C186.

Appears to lack serine protease inhibitor activity in vitro when tested with bovine pancreatic alpha-chymotrypsin and elastase. May be involved in cuticle biosynthesis. The sequence is that of Kunitz-type protein bli-5 from Haemonchus contortus (Barber pole worm).